We begin with the raw amino-acid sequence, 743 residues long: GTPase-activating protein gyp7 (743 aa).

The Rab-GAP TBC domain occupies 411–633; that stretch reads GIQPSLRKEV…KLWDVLFTNY (223 aa).

The protein resides in the cytoplasm. Its subcellular location is the nucleus. Its function is as follows. Most effectively accelerates the intrinsic GTPase activity of ypt7. The chain is GTPase-activating protein gyp7 from Schizosaccharomyces pombe (strain 972 / ATCC 24843) (Fission yeast).